A 214-amino-acid polypeptide reads, in one-letter code: LexA repressor (214 aa).

A DNA-binding region (H-T-H motif) is located at residues 26–46 (VREIGEAVGLSSSSTVHSYLK). Active-site for autocatalytic cleavage activity residues include serine 138 and lysine 175.

Belongs to the peptidase S24 family. Homodimer.

The enzyme catalyses Hydrolysis of Ala-|-Gly bond in repressor LexA.. Represses a number of genes involved in the response to DNA damage (SOS response), including recA and lexA. In the presence of single-stranded DNA, RecA interacts with LexA causing an autocatalytic cleavage which disrupts the DNA-binding part of LexA, leading to derepression of the SOS regulon and eventually DNA repair. This is LexA repressor from Desulforamulus reducens (strain ATCC BAA-1160 / DSM 100696 / MI-1) (Desulfotomaculum reducens).